Reading from the N-terminus, the 251-residue chain is Derlin-1 (251 aa).

Ser2 is subject to N-acetylserine. Topologically, residues 2 to 15 are cytoplasmic; sequence SDIGDWFRSIPAIT. Residues 16–31 traverse the membrane as a helical segment; the sequence is RYWFAATVAVPLIGKL. Topologically, residues 32–69 are lumenal; sequence GIISPAYFFLWPEAFLYRFQIWRPFTATFYFPVGPGTG. Residues 70–89 form a helical membrane-spanning segment; the sequence is FLYLVNLYFLYQYSTRLEAG. At 90–94 the chain is on the cytoplasmic side; it reads AFDGR. A helical membrane pass occupies residues 95 to 115; that stretch reads PADYLFMLLFNWICIVITGLA. Residues 116–122 lie on the Lumenal side of the membrane; it reads MDMQLLM. The chain crosses the membrane as a helical span at residues 123-137; sequence IPLIMSVLYVWAQLN. Residues 138-154 lie on the Cytoplasmic side of the membrane; that stretch reads RDLIVSFWFGTRFKACY. The helical transmembrane segment at 155 to 166 threads the bilayer; it reads LPWVILGFNYII. The Lumenal portion of the chain corresponds to 167–170; sequence GGSV. A helical transmembrane segment spans residues 171–189; that stretch reads INELIGNLVGHLYFFLMFR. Over 190 to 251 the chain is Cytoplasmic; the sequence is YPMDLGGRNF…WGQGFRLGDQ (62 aa). Ser201 is subject to Phosphoserine. Phosphothreonine is present on Thr202. Ser226 is modified (phosphoserine). Positions 229–251 are disordered; it reads RAADQNGGGGRHNWGQGFRLGDQ. Residues 241 to 248 carry the SHP-box motif; the sequence is NWGQGFRL.

The protein belongs to the derlin family. In terms of assembly, homotetramer. The four subunits of the tetramer are arranged in a twofold symmetry. Forms homo- and heterooligomers with DERL2 and DERL3; binding to DERL3 is poorer than that between DERL2 and DERL3. Interacts (via SHP-box motif) with VCP. Interacts with AMFR, SELENOS, SEL1L, SELENOK and SYVN1, as well as with SEL1L-SYVN1 and VCP-SELENOS protein complexes; this interaction is weaker than that observed between DERL2 and these complexes. Interacts with NGLY1 and YOD1. Does not bind to EDEM1. Interacts with DNAJB9. Interacts with RNF103. Interacts with HM13. Interacts with XBP1 isoform 1 (via luminal/ectodomain domain); the interaction obviates the need for ectodomain shedding prior HM13/SPP-mediated XBP1 isoform 1 cleavage. Interacts with the signal recognition particle/SRP and the SRP receptor; in the process of endoplasmic reticulum stress-induced pre-emptive quality control. May interact with UBXN6. Interacts with ZFAND2B; probably through VCP. Interacts with CCDC47. Interacts with C18orf32. May interact with TRAM1. Forms a complex with SVIP and VCP/p97. As to expression, widely expressed, with lowest levels in brain and heart.

It is found in the endoplasmic reticulum membrane. In terms of biological role, functional component of endoplasmic reticulum-associated degradation (ERAD) for misfolded lumenal proteins. Forms homotetramers which encircle a large channel traversing the endoplasmic reticulum (ER) membrane. This allows the retrotranslocation of misfolded proteins from the ER into the cytosol where they are ubiquitinated and degraded by the proteasome. The channel has a lateral gate within the membrane which provides direct access to membrane proteins with no need to reenter the ER lumen first. May mediate the interaction between VCP and the misfolded protein. Also involved in endoplasmic reticulum stress-induced pre-emptive quality control, a mechanism that selectively attenuates the translocation of newly synthesized proteins into the endoplasmic reticulum and reroutes them to the cytosol for proteasomal degradation. By controlling the steady-state expression of the IGF1R receptor, indirectly regulates the insulin-like growth factor receptor signaling pathway. The polypeptide is Derlin-1 (Mus musculus (Mouse)).